A 978-amino-acid chain; its full sequence is Receptor like protein 21 (978 aa).

The N-terminal stretch at 1–27 is a signal peptide; the sequence is MLLAMEGKLFLCQYLIWVMLLLGQLHG. At 28-930 the chain is on the extracellular side; it reads CTSCIEKERE…EEDDKAAIDM (903 aa). Residues Asn-64, Asn-79, Asn-102, Asn-116, and Asn-155 are each glycosylated (N-linked (GlcNAc...) asparagine). LRR repeat units lie at residues 141–167, 169–189, 190–213, 214–237, 238–262, 264–287, 288–310, 312–335, 337–361, 362–385, 386–409, 410–432, 433–455, 457–480, 481–504, 506–529, 530–553, 554–577, 579–601, 602–625, 627–646, 647–671, 673–693, 694–716, 788–811, 812–835, 837–859, and 860–885; these read LRNL…AATS, TTLI…GLKD, LTNL…LIHL, KKLK…ELQN, LINL…VFCK, KNLR…LGSL, KKLR…SFSS, ESLE…PLTN, TNLK…TWQP, NFQL…LLYQ, KKLR…LLTN, NPEL…PTMV, HNLQ…MDHA, PNLV…IGEM, KNIS…FVTG, VSIM…ETNF, PSLD…LSNS, TMLR…LFEF, YLDY…LLGM, PFLS…VDSE, GIYM…DTLL, KSVQ…DTQS, NILL…LCDL, SNVR…CLSN, LRLM…ELGD, LLKL…SFSK, IDVE…LLSS, and LTSL…QFNT. Residue Asn-204 is glycosylated (N-linked (GlcNAc...) asparagine). N-linked (GlcNAc...) asparagine glycosylation occurs at Asn-335. N-linked (GlcNAc...) asparagine glycosylation is found at Asn-397 and Asn-420. 3 N-linked (GlcNAc...) asparagine glycosylation sites follow: Asn-463, Asn-482, and Asn-492. Residue Asn-552 is glycosylated (N-linked (GlcNAc...) asparagine). Asn-636 carries N-linked (GlcNAc...) asparagine glycosylation. N-linked (GlcNAc...) asparagine glycosylation is found at Asn-681 and Asn-716. N-linked (GlcNAc...) asparagine glycosylation is present at Asn-819. N-linked (GlcNAc...) asparagine glycosylation occurs at Asn-872. Residues 902–922 are disordered; sequence TSRSCETNKSPEEADNGQEEE. A helical membrane pass occupies residues 931–951; the sequence is MVFYFSTASIYVTALIGVLVL. At 952-978 the chain is on the cytoplasmic side; that stretch reads MCFDCPWRRAWLRIVDAFIASAKHVLP.

It belongs to the RLP family.

It localises to the cell membrane. This is Receptor like protein 21 from Arabidopsis thaliana (Mouse-ear cress).